The primary structure comprises 282 residues: Bis(5'-nucleosyl)-tetraphosphatase, symmetrical (282 aa).

It belongs to the Ap4A hydrolase family.

It carries out the reaction P(1),P(4)-bis(5'-adenosyl) tetraphosphate + H2O = 2 ADP + 2 H(+). In terms of biological role, hydrolyzes diadenosine 5',5'''-P1,P4-tetraphosphate to yield ADP. The polypeptide is Bis(5'-nucleosyl)-tetraphosphatase, symmetrical (Shigella dysenteriae serotype 1 (strain Sd197)).